Here is a 694-residue protein sequence, read N- to C-terminus: Acetyl-coenzyme A synthetase (694 aa).

Residues M1–L23 are disordered. Residues P9–L23 show a composition bias toward polar residues. Residues R229 to K232 and T347 contribute to the CoA site. ATP contacts are provided by residues G423–P425, D447–T452, D536, and R551. Residue S559 participates in CoA binding. R562 provides a ligand contact to ATP. Residue R628 coordinates CoA.

This sequence belongs to the ATP-dependent AMP-binding enzyme family.

It carries out the reaction acetate + ATP + CoA = acetyl-CoA + AMP + diphosphate. The chain is Acetyl-coenzyme A synthetase (ACS) from Cryptosporidium parvum.